The chain runs to 129 residues: Small ribosomal subunit protein uS11 (129 aa).

The protein belongs to the universal ribosomal protein uS11 family. As to quaternary structure, part of the 30S ribosomal subunit. Interacts with proteins S7 and S18. Binds to IF-3.

Functionally, located on the platform of the 30S subunit, it bridges several disparate RNA helices of the 16S rRNA. Forms part of the Shine-Dalgarno cleft in the 70S ribosome. This Bacillus cereus (strain ATCC 14579 / DSM 31 / CCUG 7414 / JCM 2152 / NBRC 15305 / NCIMB 9373 / NCTC 2599 / NRRL B-3711) protein is Small ribosomal subunit protein uS11.